The primary structure comprises 133 residues: MEYSTFGRHVAVDTWGVQFDLLNDAEFLKKEMIEAAEACGATVLSVQAKQFSPQGATVLVLLSESHLSIHTYPERGFAALDCYTCGETVDPQIAIDYLVSVLKPEKTYAKKLVRGLGELQVVEPEMKLVEAAK.

Catalysis depends on Ser65, which acts as the Schiff-base intermediate with substrate; via pyruvic acid. Ser65 is modified (pyruvic acid (Ser); by autocatalysis). The Proton acceptor; for processing activity role is filled by His70. The active-site Proton donor; for catalytic activity is the Cys85.

This sequence belongs to the prokaryotic AdoMetDC family. Type 1 subfamily. Heterotetramer of two alpha and two beta chains arranged as a dimer of alpha/beta heterodimers. Pyruvate is required as a cofactor. Is synthesized initially as an inactive proenzyme. Formation of the active enzyme involves a self-maturation process in which the active site pyruvoyl group is generated from an internal serine residue via an autocatalytic post-translational modification. Two non-identical subunits are generated from the proenzyme in this reaction, and the pyruvate is formed at the N-terminus of the alpha chain, which is derived from the carboxyl end of the proenzyme. The post-translation cleavage follows an unusual pathway, termed non-hydrolytic serinolysis, in which the side chain hydroxyl group of the serine supplies its oxygen atom to form the C-terminus of the beta chain, while the remainder of the serine residue undergoes an oxidative deamination to produce ammonia and the pyruvoyl group blocking the N-terminus of the alpha chain.

The catalysed reaction is S-adenosyl-L-methionine + H(+) = S-adenosyl 3-(methylsulfanyl)propylamine + CO2. Its pathway is amine and polyamine biosynthesis; S-adenosylmethioninamine biosynthesis; S-adenosylmethioninamine from S-adenosyl-L-methionine: step 1/1. Catalyzes the decarboxylation of S-adenosylmethionine to S-adenosylmethioninamine (dcAdoMet), the propylamine donor required for the synthesis of the polyamines spermine and spermidine from the diamine putrescine. The chain is S-adenosylmethionine decarboxylase proenzyme from Brevibacillus brevis (strain 47 / JCM 6285 / NBRC 100599).